Reading from the N-terminus, the 301-residue chain is MKHLLSVCDMDNVVDLLDLADDYKEGKIREKILRGKTLAMIFEKSSTRTRVSFEVGAFQMGAQPLYLSASDLQLGRGEPIADTARTLSRYVDGIMIRAISHSDVVELAGEASVPVINGLTDLEHPCQALADMQTIREKLGGFDGRLVFVGDGNNVCHSLLLITATLGMDMDVACPPGYEPDPGIREMAGKIADETGSRIRVIHDPSEAVRGADVVYTDVWVSMGYEDEAEDRLEVFRPYQVNMELMELAAPEAIFMHCLPAVRGQETTAEVIDGPHSVVWDQAENRLHAQKAIMHWLMGDI.

Carbamoyl phosphate is bound by residues 46–49 (STRT), glutamine 73, arginine 97, and 124–127 (HPCQ). Residues asparagine 154, aspartate 218, and 222–223 (SM) each bind L-ornithine. Carbamoyl phosphate is bound by residues 258 to 259 (CL) and arginine 286.

This sequence belongs to the aspartate/ornithine carbamoyltransferase superfamily. OTCase family.

Its subcellular location is the cytoplasm. It catalyses the reaction carbamoyl phosphate + L-ornithine = L-citrulline + phosphate + H(+). The protein operates within amino-acid biosynthesis; L-arginine biosynthesis; L-arginine from L-ornithine and carbamoyl phosphate: step 1/3. In terms of biological role, reversibly catalyzes the transfer of the carbamoyl group from carbamoyl phosphate (CP) to the N(epsilon) atom of ornithine (ORN) to produce L-citrulline. The chain is Ornithine carbamoyltransferase (argF) from Methanothermobacter thermautotrophicus (strain ATCC 29096 / DSM 1053 / JCM 10044 / NBRC 100330 / Delta H) (Methanobacterium thermoautotrophicum).